The primary structure comprises 379 residues: 4-hydroxy-3-methylbut-2-enyl diphosphate reductase (379 aa).

Cys39 contacts [4Fe-4S] cluster. (2E)-4-hydroxy-3-methylbut-2-enyl diphosphate is bound at residue His69. His69 serves as a coordination point for dimethylallyl diphosphate. His69 is a binding site for isopentenyl diphosphate. Cys130 contacts [4Fe-4S] cluster. Residue His158 coordinates (2E)-4-hydroxy-3-methylbut-2-enyl diphosphate. His158 serves as a coordination point for dimethylallyl diphosphate. His158 contacts isopentenyl diphosphate. Glu160 functions as the Proton donor in the catalytic mechanism. Thr223 lines the (2E)-4-hydroxy-3-methylbut-2-enyl diphosphate pocket. [4Fe-4S] cluster is bound at residue Cys261. (2E)-4-hydroxy-3-methylbut-2-enyl diphosphate is bound by residues Ser290, Ser291, Asn292, and Ser352. Positions 290, 291, 292, and 352 each coordinate dimethylallyl diphosphate. Isopentenyl diphosphate contacts are provided by Ser290, Ser291, Asn292, and Ser352.

It belongs to the IspH family. Requires [4Fe-4S] cluster as cofactor.

The catalysed reaction is isopentenyl diphosphate + 2 oxidized [2Fe-2S]-[ferredoxin] + H2O = (2E)-4-hydroxy-3-methylbut-2-enyl diphosphate + 2 reduced [2Fe-2S]-[ferredoxin] + 2 H(+). It catalyses the reaction dimethylallyl diphosphate + 2 oxidized [2Fe-2S]-[ferredoxin] + H2O = (2E)-4-hydroxy-3-methylbut-2-enyl diphosphate + 2 reduced [2Fe-2S]-[ferredoxin] + 2 H(+). It participates in isoprenoid biosynthesis; dimethylallyl diphosphate biosynthesis; dimethylallyl diphosphate from (2E)-4-hydroxy-3-methylbutenyl diphosphate: step 1/1. The protein operates within isoprenoid biosynthesis; isopentenyl diphosphate biosynthesis via DXP pathway; isopentenyl diphosphate from 1-deoxy-D-xylulose 5-phosphate: step 6/6. In terms of biological role, catalyzes the conversion of 1-hydroxy-2-methyl-2-(E)-butenyl 4-diphosphate (HMBPP) into a mixture of isopentenyl diphosphate (IPP) and dimethylallyl diphosphate (DMAPP). Acts in the terminal step of the DOXP/MEP pathway for isoprenoid precursor biosynthesis. This chain is 4-hydroxy-3-methylbut-2-enyl diphosphate reductase, found in Synechocystis sp. (strain ATCC 27184 / PCC 6803 / Kazusa).